Reading from the N-terminus, the 349-residue chain is Isopentenyl-diphosphate delta-isomerase (349 aa).

6-7 (RK) contacts substrate. FMN contacts are provided by residues 62–64 (AMT), S93, and N122. Q152 lines the substrate pocket. Mg(2+) is bound at residue E153. Residues K184, T214, 258 to 259 (GG), and 280 to 281 (AG) contribute to the FMN site.

Belongs to the IPP isomerase type 2 family. Homooctamer. Dimer of tetramers. FMN serves as cofactor. It depends on NADPH as a cofactor. Requires Mg(2+) as cofactor.

It is found in the cytoplasm. The catalysed reaction is isopentenyl diphosphate = dimethylallyl diphosphate. In terms of biological role, involved in the biosynthesis of isoprenoids. Catalyzes the 1,3-allylic rearrangement of the homoallylic substrate isopentenyl (IPP) to its allylic isomer, dimethylallyl diphosphate (DMAPP). The protein is Isopentenyl-diphosphate delta-isomerase of Bacillus cereus (strain AH187).